Here is a 452-residue protein sequence, read N- to C-terminus: MVLNIKAPENIVLKPTITVFGVGGAGSNAVNNMISANLQGANFVVANTDAQSLEHSLCTNKIQLGVSTTRGLGAGASPEVGALAAQESESEIRSYLENSNMVFITAGMGGGTGTGSAPVIARIAKELGILTVGVVTKPFHFEGGHRMKTADKGLIELQQFVDTLIVIPNQNLFRIANEQTTFADAFKMADDILHAGVRGVTDLMIMPGLINLDFADIKAVMSEMGKAMMGTGEASGEDRAIKAAESAISNPLLDHSSMCGARGVLINITGGSDMTLFEVDNAANRIREEVDNLDANIIFGSTFNPELKGIIRVSVVATGIDADKVPTYKPAIAETTNIVPEETYNEPIVQPTQIEEIPDFNSYSTENIEITDSPINQNFIGNEKELGLHANSFNKSEDDSPKPSFLGKIWGSLRASNNQTLERKNIVVNTLDQDNKESDIHDIPAFLRKKRD.

GTP contacts are provided by residues glycine 24–asparagine 28, glycine 111–glycine 113, glutamate 142, arginine 146, and aspartate 190.

The protein belongs to the FtsZ family. Homodimer. Polymerizes to form a dynamic ring structure in a strictly GTP-dependent manner. Interacts directly with several other division proteins.

It localises to the cytoplasm. In terms of biological role, essential cell division protein that forms a contractile ring structure (Z ring) at the future cell division site. The regulation of the ring assembly controls the timing and the location of cell division. One of the functions of the FtsZ ring is to recruit other cell division proteins to the septum to produce a new cell wall between the dividing cells. Binds GTP and shows GTPase activity. The chain is Cell division protein FtsZ from Rickettsia felis (strain ATCC VR-1525 / URRWXCal2) (Rickettsia azadi).